Reading from the N-terminus, the 391-residue chain is Mannose-6-phosphate isomerase (391 aa).

The Zn(2+) site is built by Q97, H99, E134, and H255. R274 is a catalytic residue. K280 is subject to N6-acetyllysine.

Belongs to the mannose-6-phosphate isomerase type 1 family. Zn(2+) is required as a cofactor.

It localises to the cytoplasm. The enzyme catalyses D-mannose 6-phosphate = D-fructose 6-phosphate. Functionally, involved in the conversion of glucose to GDP-L-fucose, which can be converted to L-fucose, a capsular polysaccharide. This chain is Mannose-6-phosphate isomerase (manA), found in Escherichia coli (strain K12).